A 182-amino-acid chain; its full sequence is Large ribosomal subunit protein uL10 (182 aa).

The protein belongs to the universal ribosomal protein uL10 family. As to quaternary structure, part of the ribosomal stalk of the 50S ribosomal subunit. The N-terminus interacts with L11 and the large rRNA to form the base of the stalk. The C-terminus forms an elongated spine to which L12 dimers bind in a sequential fashion forming a multimeric L10(L12)X complex.

In terms of biological role, forms part of the ribosomal stalk, playing a central role in the interaction of the ribosome with GTP-bound translation factors. In Herminiimonas arsenicoxydans, this protein is Large ribosomal subunit protein uL10.